The chain runs to 284 residues: Cell division protein FtsQ (284 aa).

Positions 1–10 (MAFGKSKNRR) are enriched in basic residues. Residues 1-23 (MAFGKSKNRRRQDAAQQKEAVRG) form a disordered region. The Cytoplasmic segment spans residues 1–34 (MAFGKSKNRRRQDAAQQKEAVRGAVRSQGPRALK). A helical membrane pass occupies residues 35–52 (VLGLTLGTGLLVWGGAAL). The Periplasmic segment spans residues 53-284 (REWTLTSPRF…ASERSGASMR (232 aa)). The 69-residue stretch at 62-130 (FELEAVSFSG…NRVSVEVTEH (69 aa)) folds into the POTRA domain.

The protein belongs to the FtsQ/DivIB family. FtsQ subfamily.

Its subcellular location is the cell inner membrane. Functionally, essential cell division protein. The polypeptide is Cell division protein FtsQ (Myxococcus fulvus (strain ATCC BAA-855 / HW-1)).